The following is a 440-amino-acid chain: Ferreportin (440 aa).

The Cytoplasmic portion of the chain corresponds to 1–8 (MKVQSLLR). The chain crosses the membrane as a helical span at residues 9-38 (IETQLLLGRLLTRSGDQAWDFVVPFALLVI). Asp-24 contacts Ca(2+). Over 39–42 (FPGK) the chain is Extracellular. A helical membrane pass occupies residues 43-69 (LQVAAFYYLIVKIGTFLLTPSSGKWID). Residues 70-72 (THP) are Cytoplasmic-facing. Residues 73–103 (RIQVVKWGVWLQFFAILAGMVFFGMLDGLVR) form a helical membrane-spanning segment. Residue Gln-84 participates in Ca(2+) binding. At 104–109 (AGGRES) the chain is on the extracellular side. Residues 110–145 (WLLSVLFIALALSGVMASLGSQITDISVGNDLAPSL) form a helical membrane-spanning segment. At 146 to 147 (VA) the chain is on the cytoplasmic side. A helical transmembrane segment spans residues 148-176 (PEKLTHFNSWLRRIDLATEVGAPILAGAL). Residues 177 to 186 (FAFHPEQLPL) lie on the Extracellular side of the membrane. The helical transmembrane segment at 187–213 (AGLFLIGLWNLVSFVPEYFLLRNVIQR) threads the bilayer. The Ca(2+) site is built by Asn-196 and Glu-203. Over 214–242 (SGLKIKVLTEAQSWKDTFHINLRGSFSDP) the chain is Cytoplasmic. A helical transmembrane segment spans residues 243-271 (IFWLILSYALLWLSVLSPHGVLLAAYLKD). The Extracellular segment spans residues 272–276 (EMRLP). A helical membrane pass occupies residues 277 to 304 (ETEIGLFRGLGAVFGLISTVSFPYLVRR). Residues 305 to 306 (LG) are Cytoplasmic-facing. A helical membrane pass occupies residues 307–329 (LISSSRWHLGFQGVTLGIAVTAF). Residues 330–335 (AMGSTA) are Extracellular-facing. The chain crosses the membrane as a helical span at residues 336 to 365 (SVYVFLGCILLSRVGLYGFSNGEFELRQRL). The Cytoplasmic portion of the chain corresponds to 366 to 370 (IPEGR). A helical transmembrane segment spans residues 371 to 395 (RGELNSLSSLTTTSATLILFSAGSL). At 396-398 (LPQ) the chain is on the extracellular side. A helical transmembrane segment spans residues 399–424 (TEDFKYLVYVSLAAVLLANVVFIKWS). The Cytoplasmic segment spans residues 425 to 440 (SRQGVVTSGAAEPVES).

It belongs to the ferroportin (FP) (TC 2.A.100) family. Ca(2+) serves as cofactor.

The protein localises to the cell membrane. Its function is as follows. Iron transpoter that exports Fe(2+) from the cell. Also binds to Co(2+) and Ni(2+). May act as a multivalent divalent metal transporter. The transporter is composed of 12 transmembrane (TM) helices organized into N-terminal (TM1-6) and C-terminal (TM7-12) domains. The substrate-binding site is formed at the interface of the two domains and is alternately accessible from either side of the membrane. The transport cycle is viewed as a series of ligand-induced conformational changes that include open outward and open inward states. This Bdellovibrio bacteriovorus (strain ATCC 15356 / DSM 50701 / NCIMB 9529 / HD100) protein is Ferreportin (slc39).